The primary structure comprises 357 residues: RNA 3'-terminal phosphate cyclase (357 aa).

Residues Gln-102 and His-293 to Asp-296 contribute to the ATP site. The active-site Tele-AMP-histidine intermediate is His-319.

The protein belongs to the RNA 3'-terminal cyclase family. Type 1 subfamily.

The protein localises to the cytoplasm. The catalysed reaction is a 3'-end 3'-phospho-ribonucleotide-RNA + ATP = a 3'-end 2',3'-cyclophospho-ribonucleotide-RNA + AMP + diphosphate. Functionally, catalyzes the conversion of 3'-phosphate to a 2',3'-cyclic phosphodiester at the end of RNA. The mechanism of action of the enzyme occurs in 3 steps: (A) adenylation of the enzyme by ATP; (B) transfer of adenylate to an RNA-N3'P to produce RNA-N3'PP5'A; (C) and attack of the adjacent 2'-hydroxyl on the 3'-phosphorus in the diester linkage to produce the cyclic end product. The biological role of this enzyme is unknown but it is likely to function in some aspects of cellular RNA processing. This chain is RNA 3'-terminal phosphate cyclase, found in Desulfurococcus amylolyticus (strain DSM 18924 / JCM 16383 / VKM B-2413 / 1221n) (Desulfurococcus kamchatkensis).